The sequence spans 127 residues: Large ribosomal subunit protein uL22c (127 aa).

It belongs to the universal ribosomal protein uL22 family. In terms of assembly, part of the 50S ribosomal subunit.

The protein resides in the plastid. It is found in the chloroplast. Functionally, this protein binds specifically to 23S rRNA. The globular domain of the protein is located near the polypeptide exit tunnel on the outside of the subunit, while an extended beta-hairpin is found that lines the wall of the exit tunnel in the center of the 70S ribosome. The polypeptide is Large ribosomal subunit protein uL22c (rpl22) (Acorus calamus var. americanus (American sweet flag)).